We begin with the raw amino-acid sequence, 169 residues long: Neurotensin/neuromedin N (169 aa).

The N-terminal stretch at 1 to 22 (MIGMNLQLVCLTLLAFSSWSLC) is a signal peptide.

Belongs to the neurotensin family. In terms of assembly, interacts with NTSR1. Interacts with SORT1. Interacts with SORL1. Neurotensin is cleaved and degraded by Angiotensin-converting enzyme (ACE) and neprilysin (MME).

It is found in the secreted. Its subcellular location is the cytoplasmic vesicle. The protein resides in the secretory vesicle. In terms of biological role, neurotensin may play an endocrine or paracrine role in the regulation of fat metabolism. It causes contraction of smooth muscle. The polypeptide is Neurotensin/neuromedin N (Nts) (Rattus norvegicus (Rat)).